Consider the following 25-residue polypeptide: Caerin-1.6 (25 aa).

L25 is subject to Leucine amide.

The protein belongs to the frog skin active peptide (FSAP) family. Caerin subfamily. Expressed by the skin dorsal glands.

The protein localises to the secreted. Functionally, antimicrobial peptide. Adopts an alpha helical conformation which can disrupt bacterial membranes. Strongly inhibits the formation of NO by neuronal nitric oxide synthase (nNOS) at micromolar concentrations. Acts by a non-competitive mechanism, probably by binding to calcium/calmodulin and as a consequence blocking calmodulin attachment to nNOS. In terms of biological role, does not show antimicrobial activity. This chain is Caerin-1.6, found in Ranoidea chloris (Red-eyed tree frog).